A 541-amino-acid polypeptide reads, in one-letter code: Glutamyl-tRNA(Gln) amidotransferase subunit B, mitochondrial (541 aa).

Belongs to the GatB/GatE family. GatB subfamily. Subunit of the heterotrimeric GatFAB amidotransferase (AdT) complex, composed of A, B and F subunits.

Its subcellular location is the mitochondrion. It catalyses the reaction L-glutamyl-tRNA(Gln) + L-glutamine + ATP + H2O = L-glutaminyl-tRNA(Gln) + L-glutamate + ADP + phosphate + H(+). Functionally, allows the formation of correctly charged Gln-tRNA(Gln) through the transamidation of misacylated Glu-tRNA(Gln) in the mitochondria. The reaction takes place in the presence of glutamine and ATP through an activated gamma-phospho-Glu-tRNA(Gln). The polypeptide is Glutamyl-tRNA(Gln) amidotransferase subunit B, mitochondrial (Saccharomyces cerevisiae (strain RM11-1a) (Baker's yeast)).